The primary structure comprises 344 residues: L-threonine 3-dehydrogenase (344 aa).

Cys-42 provides a ligand contact to Zn(2+). Residues Thr-44 and His-47 each act as charge relay system in the active site. Residues His-67, Glu-68, Cys-97, Cys-100, Cys-103, and Cys-111 each contribute to the Zn(2+) site. NAD(+) contacts are provided by residues Ile-179, Asp-199, Arg-204, 266–268 (LGI), and 290–291 (IY).

This sequence belongs to the zinc-containing alcohol dehydrogenase family. In terms of assembly, homotetramer. Zn(2+) serves as cofactor.

It is found in the cytoplasm. It carries out the reaction L-threonine + NAD(+) = (2S)-2-amino-3-oxobutanoate + NADH + H(+). It participates in amino-acid degradation; L-threonine degradation via oxydo-reductase pathway; glycine from L-threonine: step 1/2. Its function is as follows. Catalyzes the NAD(+)-dependent oxidation of L-threonine to 2-amino-3-ketobutyrate. This chain is L-threonine 3-dehydrogenase, found in Chelativorans sp. (strain BNC1).